A 261-amino-acid chain; its full sequence is Short chain dehydrogenase/reductase astE (261 aa).

NADP(+) contacts are provided by isoleucine 24, aspartate 70, asparagine 97, and lysine 131. Residues serine 150 and tyrosine 164 each act as proton donor in the active site. NADP(+) is bound by residues tyrosine 164, lysine 168, valine 197, and threonine 199. Catalysis depends on lysine 168, which acts as the Lowers pKa of active site Tyr.

This sequence belongs to the short-chain dehydrogenases/reductases (SDR) family.

It functions in the pathway secondary metabolite biosynthesis; terpenoid biosynthesis. Its function is as follows. Short chain dehydrogenase/reductase; part of the gene cluster that mediates the biosynthesis of astellolides, drimane-type sesquiterpene esters that show antimicrobial, anti-inflammatory, and anti-tumor activities. The first step in astellolide biosynthesis is performed by the sesquiterpene cyclase astC that catalyzes the formation of drimanyl pyrophosphate from farnesyl pyrophosphate. Drimanyl pyrophosphate is then dephosphorylated by the sesquiterpene phosphatase astI to produce drimanyl monophosphate which is further dephosphorylated to drim-8-ene-11-ol by atsK. Drim-8-ene-11-ol is converted to confertifolin, probably by the cytochrome P450 monooxygenase astD and/or the dehydrogenase astE. The cytochrome P450 monooxygenases astB, astF and astJ then hydroxylate confertifolin at C6, C14, or C15 to form trihydroxy confertifolin. The nonribosomal peptide synthetase astA catalyzes ester bond formation between trihydroxy contifolin and benzoic acid (BA) or 4-hydroxy benzoic acid (4HBA), leading to the formation of dideacetyl astellolides A and B, respectively. Finally, the O-acetyltransferase astG converts dideacetyl astellolides A and B into deacetyl astellolides A and B. The polypeptide is Short chain dehydrogenase/reductase astE (Aspergillus oryzae (strain ATCC 42149 / RIB 40) (Yellow koji mold)).